The chain runs to 180 residues: MINNAIARRYAKALVQLGSEKDLIDRFSQELKVVSGVFAGNAELRAAFGNPAFTADQKKQIMRDLIARMQCSELVANFLLLLVDKNRVVCLPEIVETYEKLADEQSGVIRPMITTAFALDDSQVNAIKGALEQKTGKKVVPQVKVDQSLIGGVVTQIGDIAYDSSVKTQLARIHDILQKG.

Belongs to the ATPase delta chain family. In terms of assembly, F-type ATPases have 2 components, F(1) - the catalytic core - and F(0) - the membrane proton channel. F(1) has five subunits: alpha(3), beta(3), gamma(1), delta(1), epsilon(1). F(0) has three main subunits: a(1), b(2) and c(10-14). The alpha and beta chains form an alternating ring which encloses part of the gamma chain. F(1) is attached to F(0) by a central stalk formed by the gamma and epsilon chains, while a peripheral stalk is formed by the delta and b chains.

The protein localises to the cell inner membrane. F(1)F(0) ATP synthase produces ATP from ADP in the presence of a proton or sodium gradient. F-type ATPases consist of two structural domains, F(1) containing the extramembraneous catalytic core and F(0) containing the membrane proton channel, linked together by a central stalk and a peripheral stalk. During catalysis, ATP synthesis in the catalytic domain of F(1) is coupled via a rotary mechanism of the central stalk subunits to proton translocation. In terms of biological role, this protein is part of the stalk that links CF(0) to CF(1). It either transmits conformational changes from CF(0) to CF(1) or is implicated in proton conduction. This chain is ATP synthase subunit delta, found in Trichlorobacter lovleyi (strain ATCC BAA-1151 / DSM 17278 / SZ) (Geobacter lovleyi).